The primary structure comprises 1066 residues: Exportin-T (1066 aa).

This sequence belongs to the exportin family.

It is found in the nucleus. Its subcellular location is the cytoplasm. Functionally, tRNA nucleus export receptor which facilitates tRNA translocation across the nuclear pore complex. Involved in pre-tRNA splicing, probably by affecting the interaction of pre-tRNA with splicing endonuclease. The sequence is that of Exportin-T (LOS1) from Laccaria bicolor (strain S238N-H82 / ATCC MYA-4686) (Bicoloured deceiver).